Consider the following 59-residue polypeptide: MAVQQNKKSPSKRGMHRSHDFLTSAPIAVEATTGEVHLRHHVSPNGYYRGRKVVKTKND.

Positions 1–24 (MAVQQNKKSPSKRGMHRSHDFLTS) are disordered.

Belongs to the bacterial ribosomal protein bL32 family.

The protein is Large ribosomal subunit protein bL32 of Ralstonia nicotianae (strain ATCC BAA-1114 / GMI1000) (Ralstonia solanacearum).